Consider the following 91-residue polypeptide: UPF0512 protein E (91 aa).

Residues 1 to 25 are compositionally biased toward low complexity; sequence MAIFKSISSISNSTSAMGSSNSTSN. The interval 1–26 is disordered; sequence MAIFKSISSISNSTSAMGSSNSTSNR.

Belongs to the UPF0512 family.

This Dictyostelium discoideum (Social amoeba) protein is UPF0512 protein E.